Reading from the N-terminus, the 491-residue chain is Serine/threonine-protein kinase 33 (491 aa).

The tract at residues 51–89 (FASQERKKERNTSRESSLKDLSIRTSNVERKPQAQWSRS) is disordered. Positions 54 to 82 (QERKKERNTSRESSLKDLSIRTSNVERKP) are enriched in basic and acidic residues. Positions 111 to 377 (YTFGRILGQG…AKELLDNQWL (267 aa)) constitute a Protein kinase domain. ATP-binding positions include 117–125 (LGQGSFGMV) and Lys140. Asp233 acts as the Proton acceptor in catalysis. The disordered stretch occupies residues 398 to 491 (KNNPESDEET…TTLFRGKKRL (94 aa)). Residues 402 to 414 (ESDEETNTDEETE) show a composition bias toward acidic residues. Ser403 carries the post-translational modification Phosphoserine. Polar residues predominate over residues 415–431 (QSAVYSPSANTAKQPTN). The span at 445 to 457 (SSNSSSSKLLSAE) shows a compositional bias: low complexity. Over residues 475–484 (AKTTLKSTTL) the composition is skewed to polar residues.

The protein belongs to the protein kinase superfamily. CAMK Ser/Thr protein kinase family. CaMK subfamily. As to quaternary structure, homodimer. Post-translationally, autophosphorylated. As to expression, highly expressed in testis, particularly in cells from the spermatogenic epithelia. Present in meiotic and post meiotic sperm cells. Significant expression is detected in lung epithelia, alveolar macrophages, horizontal cells in the retina and in embryonic organs such as heart, brain and spinal cord. Also expressed in pituitary gland, kidney, pancreas, trachea and thyroid gland.

The protein resides in the cytoplasm. It is found in the cytoskeleton. The protein localises to the perinuclear region. It carries out the reaction L-seryl-[protein] + ATP = O-phospho-L-seryl-[protein] + ADP + H(+). The enzyme catalyses L-threonyl-[protein] + ATP = O-phospho-L-threonyl-[protein] + ADP + H(+). With respect to regulation, specifically inhibited by CDD-2807 ((3-([1,1'-Biphenyl]-2-ylethynyl)-1H-indazol-5-yl)(2,6-diazaspiro[3.5]nonan-2-yl)methanone). CDD-2807 is a potential male contraceptive drug: it is not toxic, efficiently crosses the blood-testis barrier and induces a reversible contraceptive effect in male mice. Serine/threonine protein kinase required for spermatid differentiation and male fertility. Promotes sperm flagella assembly during spermatogenesis by mediating phosphorylation of fibrous sheath proteins AKAP3 and AKAP4. Also phosphorylates vimentin/VIM, thereby regulating the dynamic behavior of the intermediate filament cytoskeleton. This chain is Serine/threonine-protein kinase 33, found in Mus musculus (Mouse).